A 146-amino-acid chain; its full sequence is Probable flagellum biosynthesis repressor protein FlbT 1 (146 aa).

It belongs to the FlbT family.

In terms of biological role, has a post-transcriptional repressor function in flagellum biogenesis. Associates with the 5'-UTR of fljK mRNA and promotes its degradation. The polypeptide is Probable flagellum biosynthesis repressor protein FlbT 1 (Bradyrhizobium diazoefficiens (strain JCM 10833 / BCRC 13528 / IAM 13628 / NBRC 14792 / USDA 110)).